We begin with the raw amino-acid sequence, 205 residues long: Mitotic spindle assembly checkpoint protein MAD2A (205 aa).

Residue alanine 2 is modified to N-acetylalanine. One can recognise an HORMA domain in the interval 14–197 (RGSAEIVAEF…TTIHKVNSMV (184 aa)). 4 positions are modified to phosphoserine: serine 130, serine 170, serine 185, and serine 195. Residues 195 to 205 (SMVAYKTPVND) are required for assuming the closed conformation and for interaction with CDC20.

This sequence belongs to the MAD2 family. Monomer and homodimer. Heterodimerizes with MAD2L1 in order to form a tetrameric MAD1L1-MAD2L1 core complex. In the closed and open conformation, interacts with MAD1L1. Formation of a heterotetrameric core complex containing two molecules each of MAD1L1 and of MAD2L1 promotes binding of another molecule of MAD2L1 to each MAD2L1, resulting in a heterohexamer. Interacts with MAD2L1BP. Interacts with ADAM17/TACE. Interacts with CDC20. Dimeric MAD2L1 in the closed conformation interacts with CDC20. Monomeric MAD2L1 in the open conformation does not interact with CDC20. CDC20 competes with MAD1L1 for MAD2L1 binding. In the closed conformation, interacts with BUB1B. Interacts with TTK. Interacts with TPR. Binds to UBD (via ubiquitin-like 1 domain) during mitosis. Interacts with isoform 1 and isoform 2 of NEK2. Interacts with HSF1; this interaction occurs in mitosis. In terms of processing, phosphorylated on multiple serine residues. The level of phosphorylation varies during the cell cycle and is highest during mitosis. Phosphorylation abolishes interaction with MAD1L1 and reduces interaction with CDC20. Phosphorylated by NEK2.

The protein resides in the nucleus. The protein localises to the chromosome. It is found in the centromere. It localises to the kinetochore. Its subcellular location is the cytoplasm. The protein resides in the cytoskeleton. The protein localises to the spindle pole. Component of the spindle-assembly checkpoint that prevents the onset of anaphase until all chromosomes are properly aligned at the metaphase plate. In the closed conformation (C-MAD2) forms a heterotetrameric complex with MAD1L1 at unattached kinetochores during prometaphase, and recruits an open conformation of MAD2L1 (O-MAD2) which then promotes the conversion of O-MAD2 to C-MAD2. Required for the execution of the mitotic checkpoint which monitors the process of kinetochore-spindle attachment and inhibits the activity of the anaphase promoting complex by sequestering CDC20 until all chromosomes are aligned at the metaphase plate. This Mus musculus (Mouse) protein is Mitotic spindle assembly checkpoint protein MAD2A (Mad2l1).